The primary structure comprises 82 residues: Defensin-like protein 275 (82 aa).

The signal sequence occupies residues 1 to 23; the sequence is MALSKFQLVALLITYTLLFSCQS. 4 disulfide bridges follow: C36–C78, C42–C65, C48–C76, and C52–C77.

The protein belongs to the DEFL family.

It is found in the secreted. The protein is Defensin-like protein 275 of Arabidopsis thaliana (Mouse-ear cress).